A 199-amino-acid chain; its full sequence is MSELITGQYLSEFINRFQLQLPQPDNVLTHSHYFSATNRRAAVLIPIICRPEPTLLLTRRADHLRKHAGQVAFPGGKADPDDQSLISTALREAEEEVAIPASVVHVLGKLAPLNSSSGYHVTPIVGLVPANIPFYGNDEEVAGLFEIPLHEALSLSRYHSLDIHREGINHRVYLSWYENQFIWGLTATIIRHLAQQVSI.

The Nudix hydrolase domain maps to 38–169 (NRRAAVLIPI…SLDIHREGIN (132 aa)). The Nudix box motif lies at 76-98 (GKADPDDQSLISTALREAEEEVA). 2 residues coordinate Mg(2+): E92 and E96.

Belongs to the Nudix hydrolase family. PCD1 subfamily. It depends on Mn(2+) as a cofactor. Mg(2+) is required as a cofactor.

Functionally, probably mediates the hydrolysis of some nucleoside diphosphate derivatives. This is an uncharacterized protein from Yersinia pseudotuberculosis serotype I (strain IP32953).